Consider the following 594-residue polypeptide: Keratin, type II cytoskeletal 2 oral (594 aa).

The interval 1–164 (MSRQACKKSF…DPQIGQVKAQ (164 aa)) is head. An omega-N-methylarginine mark is found at arginine 85 and arginine 104. A coil 1A region spans residues 165–200 (EREQIKTLNNKFASFIDKVRFLEQQNKVLETKWELL). Positions 165-480 (EREQIKTLNN…KLLEGEECRL (316 aa)) constitute an IF rod domain. A linker 1 region spans residues 201 to 221 (QQQTIRSGSGPQNLEPFFESY). Residues 222-313 (ISCLRKQLDS…TLYDMELSQI (92 aa)) form a coil 1B region. The tract at residues 314–337 (QSHVSDTSVVLSMDNNRCLDLDSI) is linker 12. Residues 338 to 476 (IAEVKAQYED…ATYRKLLEGE (139 aa)) form a coil 2 region. The tail stretch occupies residues 477–594 (ECRLSGEFQN…TTSSSQQRSK (118 aa)). The segment at 497-594 (TSTSSSGSFR…TTSSSQQRSK (98 aa)) is disordered. Over residues 506–522 (RGTGGSNYGGDSSGRSG) the composition is skewed to gly residues. The span at 523–551 (GSSSSSSRGSSSRGSSGSRLGSGGSISVS) shows a compositional bias: low complexity. Arginine 541 is subject to Omega-N-methylarginine. Positions 552–564 (QQRMGFNSGGSQT) are enriched in polar residues. Residues 565–594 (SVGSSYKSGRGGSSSVQFSQTTSSSQQRSK) are compositionally biased toward low complexity.

The protein belongs to the intermediate filament family. Heterotetramer of two type I and two type II keratins.

Probably contributes to terminal cornification. The polypeptide is Keratin, type II cytoskeletal 2 oral (Mus musculus (Mouse)).